A 309-amino-acid polypeptide reads, in one-letter code: UDP-N-acetylenolpyruvoylglucosamine reductase (309 aa).

One can recognise an FAD-binding PCMH-type domain in the interval 34–198; the sequence is RVGGPAEVMF…VRARLHARPG (165 aa). Residue arginine 178 is part of the active site. The active-site Proton donor is serine 227. Glutamate 297 is an active-site residue.

Belongs to the MurB family. It depends on FAD as a cofactor.

It localises to the cytoplasm. The enzyme catalyses UDP-N-acetyl-alpha-D-muramate + NADP(+) = UDP-N-acetyl-3-O-(1-carboxyvinyl)-alpha-D-glucosamine + NADPH + H(+). It functions in the pathway cell wall biogenesis; peptidoglycan biosynthesis. Its function is as follows. Cell wall formation. This chain is UDP-N-acetylenolpyruvoylglucosamine reductase, found in Acidiphilium cryptum (strain JF-5).